Consider the following 650-residue polypeptide: Rab proteins geranylgeranyltransferase component A 1 (650 aa).

2 disordered regions span residues 156–208 and 603–650; these read IPAE…ETPK and PAPP…EPSE. Basic and acidic residues predominate over residues 177 to 190; that stretch reads ATGKKENSDAKSST. A compositionally biased stretch (polar residues) spans 616–634; it reads DSSQQEVPESSVTPETNSE.

This sequence belongs to the Rab GDI family. Monomer. Heterotrimer composed of RABGGTA, RABGGTB and CHM; within this trimer, RABGGTA and RABGGTB form the catalytic component B, while CHM (component A) mediates Rab protein binding. Can associate with the Rab GGTase dimer (RGGT or component B) prior to Rab protein binding; the association is stabilized by geranylgeranyl pyrophosphate (GGpp). The CHM:RGGT:Rab complex is destabilized by GGpp. Interacts with RAB1A, RAB1B, RAB7A and RAB27A and mediates their prenylation. Interacts with RAB5A. Interacts with the non-phosphorylated forms of RAB3A, RAB3B, RAB3C, RAB3D, RAB5B, RAB5C RAB8A, RAB8B, RAB10, RAB12, RAB35, and RAB43. As to expression, most abundant in the heart, brain, and spleen. Lower levels seen in the lung, liver, muscle and kidney. Extremely low levels seen in the testis.

Its subcellular location is the cytoplasm. The protein localises to the cytosol. In terms of biological role, substrate-binding subunit of the Rab geranylgeranyltransferase (GGTase) complex. Binds unprenylated Rab proteins and presents the substrate peptide to the catalytic component B composed of RABGGTA and RABGGTB, and remains bound to it after the geranylgeranyl transfer reaction. The component A is thought to be regenerated by transferring its prenylated Rab back to the donor membrane. Besides, a pre-formed complex consisting of CHM and the Rab GGTase dimer (RGGT or component B) can bind to and prenylate Rab proteins; this alternative pathway is proposed to be the predominant pathway for Rab protein geranylgeranylation. This chain is Rab proteins geranylgeranyltransferase component A 1 (Chm), found in Rattus norvegicus (Rat).